Consider the following 511-residue polypeptide: Probable endopeptidase p60 (511 aa).

A signal peptide spans 1–27; sequence MNMKKATIVSAAGIAVTAFAAPSVVSA. Residues 28–71 enclose the LysM 1 domain; it reads NTVVVASGDTLWGIASKTGTTVDQLKQLNKLDSDRIVPGQKLTI. In terms of domain architecture, SH3b spans 78-142; that stretch reads KVEKSVSATW…VNGKYLSDAK (65 aa). Residues 175 to 218 form the LysM 2 domain; it reads STYKVKSGDTIWALSVKYGVPVQKLIEWNNLSSSSIYVGQTIAV. 2 stretches are compositionally biased toward low complexity: residues 229–257 and 264–282; these read TVKQ…QAKP and KPAV…AKPA. The interval 229 to 291 is disordered; sequence TVKQAAPAKV…AVEQKASTPA (63 aa). Positions 297-341 constitute a LysM 3 domain; sequence ATYKVQNGDSLGKIASLFKVSVADLTNWNNLNATITIYAGQELSV. 2 stretches are compositionally biased toward low complexity: residues 347-362 and 372-390; these read KPKP…SKPA and TNTT…NTSQ. The disordered stretch occupies residues 347–390; that stretch reads KPKPAAPAKPAVSKPATSTPAKVTPTNTTNNSTPTTNVNNNTSQ. The NlpC/P60 domain maps to 393 to 511; sequence SASFSALYAE…GQYLVGFGRV (119 aa). C423 functions as the Nucleophile in the catalytic mechanism. H473 serves as the catalytic Proton acceptor. D485 is a catalytic residue.

The protein belongs to the peptidase C40 family.

Functionally, this major extracellular protein may be involved in the invasion of non-professional phagocytic cells by Listeria. The protein is Probable endopeptidase p60 (iap) of Listeria grayi (Listeria murrayi).